The chain runs to 278 residues: Translation initiation factor IF-3, mitochondrial (278 aa).

A mitochondrion-targeting transit peptide spans 1-31; that stretch reads MAALFLKRLTLQTVKSENSCIRCFGKHILQK. The disordered stretch occupies residues 249–278; it reads KAYKETQETQERDTLNKDHGNDKESNVLHQ.

Belongs to the IF-3 family.

The protein localises to the mitochondrion. In terms of biological role, IF-3 binds to the 28S ribosomal subunit and shifts the equilibrium between 55S ribosomes and their 39S and 28S subunits in favor of the free subunits, thus enhancing the availability of 28S subunits on which protein synthesis initiation begins. This is Translation initiation factor IF-3, mitochondrial (MTIF3) from Homo sapiens (Human).